Here is a 345-residue protein sequence, read N- to C-terminus: Mitochondrial substrate carrier family protein J (345 aa).

Residues 1–31 lie on the Mitochondrial intermembrane side of the membrane; sequence MSSSHTIQETKEVHTKTNKRIQWDDLDPKRY. 3 Solcar repeats span residues 30–118, 129–217, and 255–342; these read RYYF…VKQG, DLLF…SKSK, and EDPI…VKKL. Residues 32-52 traverse the membrane as a helical segment; sequence YFYNFLLGGSIDLLMFPLDVI. The Mitochondrial matrix segment spans residues 53-88; that stretch reads RTRLQVQGSQNVIQSFPQYNGTFDGFKKLIRLEGKR. A helical transmembrane segment spans residues 89 to 110; that stretch reads ALYKGFLTSECGYLCSRAIYFG. The Mitochondrial intermembrane segment spans residues 111–129; it reads SYEFVKQGFLKGRSDSDSD. Residues 130–150 traverse the membrane as a helical segment; the sequence is LLFVTTISGAISEALASVIWV. Residues 151–191 are Mitochondrial matrix-facing; the sequence is PFDVATQSVQIQGSLSKPKYKGGSDVFKKIYGERGIKGLYK. The chain crosses the membrane as a helical span at residues 192 to 208; sequence GFGATIIRNVPYSGIWW. Topologically, residues 209 to 257 are mitochondrial intermembrane; it reads GTYEISKSKLTQFNIRQKLGLKERSSHSLAVSAEIDKNNPSHEVENEDP. Residues 258–278 form a helical membrane-spanning segment; it reads IIHFISGFFAAVFATSITNPL. At 279–316 the chain is on the mitochondrial matrix side; the sequence is DVAKTRLQTGVFPENEKPNFYTIIKSTIRKEGIRALWK. Residues 317–337 traverse the membrane as a helical segment; the sequence is GLVPSLLTSTPYSMISIFLYE. Residues 338-345 are Mitochondrial intermembrane-facing; sequence EVKKLSLK.

This sequence belongs to the mitochondrial carrier (TC 2.A.29) family.

The protein localises to the mitochondrion inner membrane. Functionally, mitochondrial solute carriers shuttle metabolites, nucleotides, and cofactors through the mitochondrial inner membrane. This is Mitochondrial substrate carrier family protein J (mcfJ) from Dictyostelium discoideum (Social amoeba).